The primary structure comprises 149 residues: D-aminoacyl-tRNA deacylase (149 aa).

A Gly-cisPro motif, important for rejection of L-amino acids motif is present at residues 137–138; sequence GP.

The protein belongs to the DTD family. Homodimer.

Its subcellular location is the cytoplasm. It catalyses the reaction glycyl-tRNA(Ala) + H2O = tRNA(Ala) + glycine + H(+). The enzyme catalyses a D-aminoacyl-tRNA + H2O = a tRNA + a D-alpha-amino acid + H(+). An aminoacyl-tRNA editing enzyme that deacylates mischarged D-aminoacyl-tRNAs. Also deacylates mischarged glycyl-tRNA(Ala), protecting cells against glycine mischarging by AlaRS. Acts via tRNA-based rather than protein-based catalysis; rejects L-amino acids rather than detecting D-amino acids in the active site. By recycling D-aminoacyl-tRNA to D-amino acids and free tRNA molecules, this enzyme counteracts the toxicity associated with the formation of D-aminoacyl-tRNA entities in vivo and helps enforce protein L-homochirality. In Pediococcus pentosaceus (strain ATCC 25745 / CCUG 21536 / LMG 10740 / 183-1w), this protein is D-aminoacyl-tRNA deacylase.